A 27-amino-acid polypeptide reads, in one-letter code: CAGIGSFCGLPGLVDCCSDRCFIVCLP.

Disulfide bonds link C1–C17, C8–C21, and C16–C25.

It belongs to the conotoxin O1 superfamily. Expressed by the venom duct, in the proximal part (indicative of a defensive role).

It is found in the secreted. Functionally, this toxin activates voltage-gated sodium channels (Nav1.3/SCN3A (EC(50)=3.98 nM), Nav1.4/SCN4A (EC(50)=4.99 nM), Nav1.6/SCN8A (EC(50)=1.27 nM) and Nav1.7/SCN9A (EC(50)=2.42 nM)). It shifts the voltage-dependence of activation to more hyperpolarized potentials but has only little effect on channel inactivation. In vivo, it induces nocifensive or pain-like behaviors in mice when injected intraplantarly. This is coherent with the specific defensive role deduced from its proximal position in the venom gland. This chain is Delta-conotoxin SuVIA, found in Conus suturatus (Sutured cone).